Consider the following 136-residue polypeptide: Histone H3.2 (136 aa).

Residues 1 to 43 are disordered; that stretch reads MARTKQTARKSTGGKAPRKQLATKAARKSAPATGGVKKPHRFR. Position 5 is an N6-methylated lysine (lysine 5). N6-acetyllysine; alternate is present on lysine 10. Lysine 10 is subject to N6-methylated lysine; alternate. Position 11 is a phosphoserine (serine 11). Threonine 12 carries the phosphothreonine modification. Lysine 15 carries the N6-acetyllysine modification. 2 positions are modified to N6-acetyllysine; alternate: lysine 19 and lysine 24. N6-methylated lysine; alternate is present on residues lysine 19 and lysine 24. Lysine 28 bears the N6-methylated lysine mark. Residue serine 29 is modified to Phosphoserine. Residue lysine 37 is modified to N6-methylated lysine.

It belongs to the histone H3 family. The nucleosome is a histone octamer containing two molecules each of H2A, H2B, H3 and H4 assembled in one H3-H4 heterotetramer and two H2A-H2B heterodimers. The octamer wraps approximately 147 bp of DNA. Acetylation is generally linked to gene activation. Can be acetylated to form H3K9ac, H3K14ac, H3K18ac and H3K23ac. H3K9ac could compete with H3K9me and prevent gene silencing. H3K9ac is restricted to euchromatin. Post-translationally, methylated to form mainly H3K4me, H3K9me, H3K18me, H3K23me, H3K27me and H3K36me. H3K4me1/2/3, H3K9me3, H3K27me3 and H3K36me1/2/3 are typical marks for euchromatin, whereas heterochromatic chromocenters are enriched in H3K9me1/2 and H3K27me1/2. H2BK143ub1 is probably prerequisite for H3K4me. In terms of processing, can be phosphorylated to form H3S10ph, H3T11ph and H3S28ph.

Its subcellular location is the nucleus. It is found in the chromosome. In terms of biological role, core component of nucleosome. Nucleosomes wrap and compact DNA into chromatin, limiting DNA accessibility to the cellular machineries which require DNA as a template. Histones thereby play a central role in transcription regulation, DNA repair, DNA replication and chromosomal stability. DNA accessibility is regulated via a complex set of post-translational modifications of histones, also called histone code, and nucleosome remodeling. The chain is Histone H3.2 from Encephalartos altensteinii (Altenstein's bread tree).